Consider the following 313-residue polypeptide: Protoheme IX farnesyltransferase (313 aa).

The next 9 helical transmembrane spans lie at 35–55 (LVVFTALVGLVIAPVHLHPVL), 56–76 (AATSILCIAVGGGAAGALNMW), 98–118 (VSSPEAAAFGITLAIFSVATL), 120–140 (VLVNWLAGALLAFTIFFYAVV), 153–173 (IVIGGAAGALPPVVAWAAATG), 180–200 (IILFLIIFLWTPPHFWALALF), 226–246 (ILLYTIVLVTVAILPWPLGYF), 248–268 (AAYGLTSVALGAGMLWFAFNV), and 292–312 (LFLLFAVLPLEVAAHAVAAMI).

The protein belongs to the UbiA prenyltransferase family. Protoheme IX farnesyltransferase subfamily.

It is found in the cell inner membrane. The enzyme catalyses heme b + (2E,6E)-farnesyl diphosphate + H2O = Fe(II)-heme o + diphosphate. It functions in the pathway porphyrin-containing compound metabolism; heme O biosynthesis; heme O from protoheme: step 1/1. Converts heme B (protoheme IX) to heme O by substitution of the vinyl group on carbon 2 of heme B porphyrin ring with a hydroxyethyl farnesyl side group. In Afipia carboxidovorans (strain ATCC 49405 / DSM 1227 / KCTC 32145 / OM5) (Oligotropha carboxidovorans), this protein is Protoheme IX farnesyltransferase.